The primary structure comprises 162 residues: NADH-quinone oxidoreductase subunit I (162 aa).

4Fe-4S ferredoxin-type domains follow at residues 54-83 (RRYE…IESE) and 93-122 (TRYD…ETHI). [4Fe-4S] cluster contacts are provided by cysteine 63, cysteine 66, cysteine 69, cysteine 73, cysteine 102, cysteine 105, cysteine 108, and cysteine 112.

It belongs to the complex I 23 kDa subunit family. As to quaternary structure, NDH-1 is composed of 14 different subunits. Subunits NuoA, H, J, K, L, M, N constitute the membrane sector of the complex. [4Fe-4S] cluster serves as cofactor.

Its subcellular location is the cell inner membrane. The enzyme catalyses a quinone + NADH + 5 H(+)(in) = a quinol + NAD(+) + 4 H(+)(out). NDH-1 shuttles electrons from NADH, via FMN and iron-sulfur (Fe-S) centers, to quinones in the respiratory chain. The immediate electron acceptor for the enzyme in this species is believed to be ubiquinone. Couples the redox reaction to proton translocation (for every two electrons transferred, four hydrogen ions are translocated across the cytoplasmic membrane), and thus conserves the redox energy in a proton gradient. This is NADH-quinone oxidoreductase subunit I from Paraburkholderia xenovorans (strain LB400).